The sequence spans 252 residues: Beta-carotene isomerase D27, chloroplastic (252 aa).

The transit peptide at 1-43 directs the protein to the chloroplast; it reads MDSKMIAHNMSLTPTLAQWKKLRLKPKHTFVVGVLARPTDDIS.

Fe cation serves as cofactor. As to expression, highly expressed in roots. Expressed at low levels in leaves and stems.

The protein localises to the plastid. It is found in the chloroplast. The enzyme catalyses all-trans-beta-carotene = 9-cis-beta-carotene. Functionally, involved in strigolactones biosynthesis by catalyzing the isomerization of the C9-C10 double bond in all-trans-beta-carotene leading to 9-cis-beta-carotene and providing the substrate for CCD7. Strigolactones are hormones that inhibit tillering and shoot branching through the MAX-dependent pathway, contribute to the regulation of shoot architectural response to phosphate-limiting conditions and function as rhizosphere signals that stimulate hyphal branching of arbuscular mycorrhizal fungi and trigger seed germination of root parasitic weeds. In Medicago truncatula (Barrel medic), this protein is Beta-carotene isomerase D27, chloroplastic.